Consider the following 1070-residue polypeptide: Carbamoyl phosphate synthase large chain (1070 aa).

Residues 1-401 (MPKRDDIKTI…ALLKAVRSLE (401 aa)) form a carboxyphosphate synthetic domain region. Arg129, Arg169, Gly175, Gly176, Lys208, Ile210, Glu215, Gly241, Ile242, His243, Gln284, and Glu298 together coordinate ATP. One can recognise an ATP-grasp 1 domain in the interval 133-327 (RDLMNELGEP…IAKLAAKIAV (195 aa)). Gln284, Glu298, and Asn300 together coordinate Mg(2+). Gln284, Glu298, and Asn300 together coordinate Mn(2+). The interval 402–546 (IGADHLLLEE…YSTYEEENES (145 aa)) is oligomerization domain. The tract at residues 547–929 (TRSAKESVIV…ALYKGFVASG (383 aa)) is carbamoyl phosphate synthetic domain. The region spanning 671-861 (EKALEILQIP…MANVATRVIL (191 aa)) is the ATP-grasp 2 domain. ATP-binding residues include Arg707, Arg746, Val748, Glu752, Gly777, Val778, His779, Ser780, Gln820, and Glu832. Residues Gln820, Glu832, and Asn834 each coordinate Mg(2+). Mn(2+) is bound by residues Gln820, Glu832, and Asn834. An MGS-like domain is found at 930–1070 (TTMHDYGTVL…SEVKQPKARV (141 aa)). Residues 930–1070 (TTMHDYGTVL…SEVKQPKARV (141 aa)) are allosteric domain.

Belongs to the CarB family. In terms of assembly, composed of two chains; the small (or glutamine) chain promotes the hydrolysis of glutamine to ammonia, which is used by the large (or ammonia) chain to synthesize carbamoyl phosphate. Tetramer of heterodimers (alpha,beta)4. It depends on Mg(2+) as a cofactor. The cofactor is Mn(2+).

It catalyses the reaction hydrogencarbonate + L-glutamine + 2 ATP + H2O = carbamoyl phosphate + L-glutamate + 2 ADP + phosphate + 2 H(+). It carries out the reaction hydrogencarbonate + NH4(+) + 2 ATP = carbamoyl phosphate + 2 ADP + phosphate + 2 H(+). Its pathway is amino-acid biosynthesis; L-arginine biosynthesis; carbamoyl phosphate from bicarbonate: step 1/1. It functions in the pathway pyrimidine metabolism; UMP biosynthesis via de novo pathway; (S)-dihydroorotate from bicarbonate: step 1/3. Its function is as follows. Large subunit of the glutamine-dependent carbamoyl phosphate synthetase (CPSase). CPSase catalyzes the formation of carbamoyl phosphate from the ammonia moiety of glutamine, carbonate, and phosphate donated by ATP, constituting the first step of 2 biosynthetic pathways, one leading to arginine and/or urea and the other to pyrimidine nucleotides. The large subunit (synthetase) binds the substrates ammonia (free or transferred from glutamine from the small subunit), hydrogencarbonate and ATP and carries out an ATP-coupled ligase reaction, activating hydrogencarbonate by forming carboxy phosphate which reacts with ammonia to form carbamoyl phosphate. This Listeria monocytogenes serotype 4a (strain HCC23) protein is Carbamoyl phosphate synthase large chain.